The chain runs to 151 residues: Large-conductance mechanosensitive channel (151 aa).

A run of 2 helical transmembrane segments spans residues 12 to 32 (GNIV…ALVT) and 71 to 91 (VLLS…FLVV). The interval 122–151 (AQTNGDSPGRHGGRGTPSPTDGPLASTESQ) is disordered.

The protein belongs to the MscL family. As to quaternary structure, homopentamer.

Its subcellular location is the cell membrane. Channel that opens in response to stretch forces in the membrane lipid bilayer. May participate in the regulation of osmotic pressure changes within the cell. This chain is Large-conductance mechanosensitive channel, found in Mycobacterium bovis (strain BCG / Pasteur 1173P2).